A 207-amino-acid chain; its full sequence is Peptidyl-tRNA hydrolase (207 aa).

Tyr-30 serves as a coordination point for tRNA. The active-site Proton acceptor is the His-35. TRNA-binding residues include Tyr-81, Asn-83, and Asn-129.

It belongs to the PTH family. As to quaternary structure, monomer.

It is found in the cytoplasm. It carries out the reaction an N-acyl-L-alpha-aminoacyl-tRNA + H2O = an N-acyl-L-amino acid + a tRNA + H(+). Its function is as follows. Hydrolyzes ribosome-free peptidyl-tRNAs (with 1 or more amino acids incorporated), which drop off the ribosome during protein synthesis, or as a result of ribosome stalling. Functionally, catalyzes the release of premature peptidyl moieties from peptidyl-tRNA molecules trapped in stalled 50S ribosomal subunits, and thus maintains levels of free tRNAs and 50S ribosomes. The sequence is that of Peptidyl-tRNA hydrolase from Bordetella avium (strain 197N).